Here is a 323-residue protein sequence, read N- to C-terminus: Prostaglandin-E(2) 9-reductase (323 aa).

NADP(+)-binding positions include 23 to 24 (TY) and Asp-50. Tyr-24 contacts substrate. Residue Tyr-55 is the Proton donor of the active site. Residue His-117 coordinates substrate. Residues 166–167 (SN), Gln-190, 216–221 (YSALGS), and 270–280 (KSFTEKRIKEN) contribute to the NADP(+) site.

The protein belongs to the aldo/keto reductase family.

Its subcellular location is the cytoplasm. The catalysed reaction is prostaglandin F2alpha + NADP(+) = prostaglandin E2 + NADPH + H(+). It carries out the reaction (17R,20S)-17,20-dihydroxypregn-4-en-3-one + NADP(+) = 17alpha-hydroxyprogesterone + NADPH + H(+). It catalyses the reaction (17R,20S)-17,20-dihydroxypregn-4-en-3-one + NAD(+) = 17alpha-hydroxyprogesterone + NADH + H(+). Functionally, can convert prostaglandin E2 to prostaglandin F2-alpha. This is Prostaglandin-E(2) 9-reductase (AKR1C5) from Oryctolagus cuniculus (Rabbit).